Consider the following 179-residue polypeptide: uncharacterized protein (179 aa).

The segment at 27-54 is disordered; sequence TAKKSRVQAREARAAVEENKKAQLERDK.

This is an uncharacterized protein from Escherichia coli (strain K12).